The primary structure comprises 524 residues: Bifunctional purine biosynthesis protein PurH (524 aa).

The 154-residue stretch at 1 to 154 folds into the MGS-like domain; sequence MTRLALLSTS…KNHAHVTVLC (154 aa).

This sequence belongs to the PurH family.

It carries out the reaction (6R)-10-formyltetrahydrofolate + 5-amino-1-(5-phospho-beta-D-ribosyl)imidazole-4-carboxamide = 5-formamido-1-(5-phospho-D-ribosyl)imidazole-4-carboxamide + (6S)-5,6,7,8-tetrahydrofolate. It catalyses the reaction IMP + H2O = 5-formamido-1-(5-phospho-D-ribosyl)imidazole-4-carboxamide. It participates in purine metabolism; IMP biosynthesis via de novo pathway; 5-formamido-1-(5-phospho-D-ribosyl)imidazole-4-carboxamide from 5-amino-1-(5-phospho-D-ribosyl)imidazole-4-carboxamide (10-formyl THF route): step 1/1. Its pathway is purine metabolism; IMP biosynthesis via de novo pathway; IMP from 5-formamido-1-(5-phospho-D-ribosyl)imidazole-4-carboxamide: step 1/1. The polypeptide is Bifunctional purine biosynthesis protein PurH (Acaryochloris marina (strain MBIC 11017)).